A 187-amino-acid chain; its full sequence is Dirigent protein 23 (187 aa).

An N-terminal signal peptide occupies residues M1–G24. N182 is a glycosylation site (N-linked (GlcNAc...) asparagine).

It belongs to the plant dirigent protein family. In terms of assembly, homodimer.

It localises to the secreted. Its subcellular location is the extracellular space. It is found in the apoplast. Its function is as follows. Dirigent proteins impart stereoselectivity on the phenoxy radical-coupling reaction, yielding optically active lignans from two molecules of coniferyl alcohol in the biosynthesis of lignans, flavonolignans, and alkaloids and thus plays a central role in plant secondary metabolism. This chain is Dirigent protein 23 (DIR23), found in Arabidopsis thaliana (Mouse-ear cress).